A 429-amino-acid chain; its full sequence is Gap junction gamma-2 protein (429 aa).

At 1 to 25 (MTNMSWSFLTRLLEEIHNHSTFVGK) the chain is on the cytoplasmic side. A helical transmembrane segment spans residues 26-46 (VWLTVLVVFRIVLTAVGGESI). Residues 47-78 (YSDEQTKFTCNTRQPGCDNVCYDAFAPLSHVR) lie on the Extracellular side of the membrane. The chain crosses the membrane as a helical span at residues 79 to 99 (FWVFQIVVISTPSVMYLGYAV). Residues 100–214 (HRLARASQDE…EGLMRVYVAQ (115 aa)) lie on the Cytoplasmic side of the membrane. Residues 106–200 (SQDERRRASR…GPAGQHDGRR (95 aa)) are disordered. Basic residues predominate over residues 112–123 (RASRRRPSRRAP). Residues 124–138 (RPPLPLPPPPHPGWP) are compositionally biased toward pro residues. Positions 142 to 173 (DLGEEEPMLGLGEEDEDPGVAEGLGEDEEAED) are enriched in acidic residues. The helical transmembrane segment at 215–235 (LVARAAFEVAFLVGQYLLYGF) threads the bilayer. At 236-263 (EVRPFFACSRQPCPHVVDCFVSRPTEKT) the chain is on the extracellular side. Residues 264-284 (VFLLVMYVVSCLCLLLNLCEM) traverse the membrane as a helical segment. Over 285–429 (AHLGLGNAQD…SREGKTTVWI (145 aa)) the chain is Cytoplasmic. Disordered regions lie at residues 296 to 316 (VRGR…PPCA) and 361 to 429 (LGDL…TVWI). The span at 303–316 (PASPGPMPRPPPCA) shows a compositional bias: pro residues. S366 carries the post-translational modification Phosphoserine. Residues 372 to 395 (LPANARGPPKPGAPASGSGSATSG) show a composition bias toward low complexity.

It belongs to the connexin family. Gamma-type subfamily. A connexon is composed of a hexamer of connexins. Interacts with TJP1.

It localises to the cell membrane. It is found in the cell junction. The protein resides in the gap junction. Its function is as follows. One gap junction consists of a cluster of closely packed pairs of transmembrane channels, the connexons, through which materials of low MW diffuse from one cell to a neighboring cell. May play a role in myelination in central and peripheral nervous systems. This Bos taurus (Bovine) protein is Gap junction gamma-2 protein (GJC2).